The sequence spans 223 residues: Ribosomal RNA small subunit methyltransferase Nep1 (223 aa).

S-adenosyl-L-methionine is bound by residues Gly181, Gly186, and 199-204; that span reads LYREPL.

The protein belongs to the class IV-like SAM-binding methyltransferase superfamily. RNA methyltransferase NEP1 family. Homodimer.

It catalyses the reaction a pseudouridine in rRNA + S-adenosyl-L-methionine = an N(1)-methylpseudouridine in rRNA + S-adenosyl-L-homocysteine + H(+). Functionally, methyltransferase involved in ribosomal biogenesis. Specifically catalyzes the N1-methylation of the pseudouridine corresponding to position 914 in M.jannaschii 16S rRNA. This is Ribosomal RNA small subunit methyltransferase Nep1 from Pyrococcus furiosus (strain ATCC 43587 / DSM 3638 / JCM 8422 / Vc1).